Consider the following 880-residue polypeptide: GRB2-associated and regulator of MAPK protein 2 (880 aa).

The CABIT stretch occupies residues Arg12–Arg320. 5 disordered regions span residues Pro385 to Ser407, Ile461 to Val483, Ser527 to Ser548, Ser569 to Pro611, and Ala633 to Gln713. 2 stretches are compositionally biased toward low complexity: residues Pro640–Gly663 and Gln683–Ser696. At Ser740 the chain carries Phosphoserine. The SAM domain occupies Ser813–Arg877.

Belongs to the GAREM family.

Its function is as follows. Probable adapter protein that provides a critical link between cell surface epidermal growth factor receptor and the MAPK/ERK signaling pathway. This Mus musculus (Mouse) protein is GRB2-associated and regulator of MAPK protein 2 (Garem2).